Here is a 249-residue protein sequence, read N- to C-terminus: Triosephosphate isomerase (249 aa).

A substrate-binding site is contributed by 9–11; the sequence is NWK. His94 (electrophile) is an active-site residue. The active-site Proton acceptor is Glu166. Residues Gly172, Ser212, and 233 to 234 contribute to the substrate site; that span reads GG.

This sequence belongs to the triosephosphate isomerase family. Homodimer.

The protein localises to the cytoplasm. The enzyme catalyses D-glyceraldehyde 3-phosphate = dihydroxyacetone phosphate. The protein operates within carbohydrate biosynthesis; gluconeogenesis. It functions in the pathway carbohydrate degradation; glycolysis; D-glyceraldehyde 3-phosphate from glycerone phosphate: step 1/1. In terms of biological role, involved in the gluconeogenesis. Catalyzes stereospecifically the conversion of dihydroxyacetone phosphate (DHAP) to D-glyceraldehyde-3-phosphate (G3P). The polypeptide is Triosephosphate isomerase (Treponema pallidum (strain Nichols)).